Consider the following 873-residue polypeptide: Bifunctional uridylyltransferase/uridylyl-removing enzyme (873 aa).

Residues 1-332 (MAFQSPLTFN…NGGETEPAVI (332 aa)) form a uridylyltransferase region. The uridylyl-removing stretch occupies residues 333 to 692 (INEDFQRRGR…MSKKATRGGT (360 aa)). One can recognise an HD domain in the interval 451-573 (VDEHSVRLLN…VRDEERLEYL (123 aa)). 2 consecutive ACT domains span residues 693–773 (EVFV…VKTR) and 800–873 (LMEL…ELAP).

This sequence belongs to the GlnD family. Mg(2+) serves as cofactor.

The enzyme catalyses [protein-PII]-L-tyrosine + UTP = [protein-PII]-uridylyl-L-tyrosine + diphosphate. It carries out the reaction [protein-PII]-uridylyl-L-tyrosine + H2O = [protein-PII]-L-tyrosine + UMP + H(+). With respect to regulation, uridylyltransferase (UTase) activity is inhibited by glutamine, while glutamine activates uridylyl-removing (UR) activity. In terms of biological role, modifies, by uridylylation and deuridylylation, the PII regulatory proteins (GlnB and homologs), in response to the nitrogen status of the cell that GlnD senses through the glutamine level. Under low glutamine levels, catalyzes the conversion of the PII proteins and UTP to PII-UMP and PPi, while under higher glutamine levels, GlnD hydrolyzes PII-UMP to PII and UMP (deuridylylation). Thus, controls uridylylation state and activity of the PII proteins, and plays an important role in the regulation of nitrogen assimilation and metabolism. The chain is Bifunctional uridylyltransferase/uridylyl-removing enzyme from Vibrio vulnificus (strain CMCP6).